The sequence spans 340 residues: Phosphoribosylformylglycinamidine cyclo-ligase (340 aa).

The protein belongs to the AIR synthase family.

It is found in the cytoplasm. The enzyme catalyses 2-formamido-N(1)-(5-O-phospho-beta-D-ribosyl)acetamidine + ATP = 5-amino-1-(5-phospho-beta-D-ribosyl)imidazole + ADP + phosphate + H(+). The protein operates within purine metabolism; IMP biosynthesis via de novo pathway; 5-amino-1-(5-phospho-D-ribosyl)imidazole from N(2)-formyl-N(1)-(5-phospho-D-ribosyl)glycinamide: step 2/2. This chain is Phosphoribosylformylglycinamidine cyclo-ligase, found in Streptococcus sanguinis (strain SK36).